Reading from the N-terminus, the 602-residue chain is Elongation factor 4 (602 aa).

A tr-type G domain is found at 7 to 188 (ENIRNFSIIA…AIIELIPPPK (182 aa)). GTP contacts are provided by residues 19-24 (DHGKST) and 135-138 (NKID).

Belongs to the TRAFAC class translation factor GTPase superfamily. Classic translation factor GTPase family. LepA subfamily.

It localises to the cell inner membrane. The catalysed reaction is GTP + H2O = GDP + phosphate + H(+). Functionally, required for accurate and efficient protein synthesis under certain stress conditions. May act as a fidelity factor of the translation reaction, by catalyzing a one-codon backward translocation of tRNAs on improperly translocated ribosomes. Back-translocation proceeds from a post-translocation (POST) complex to a pre-translocation (PRE) complex, thus giving elongation factor G a second chance to translocate the tRNAs correctly. Binds to ribosomes in a GTP-dependent manner. This chain is Elongation factor 4, found in Chlamydia caviae (strain ATCC VR-813 / DSM 19441 / 03DC25 / GPIC) (Chlamydophila caviae).